The sequence spans 404 residues: Glucose-1-phosphate adenylyltransferase 2 (404 aa).

Residues Tyr-97, Gly-162, Glu-177 to Lys-178, and Ser-195 contribute to the alpha-D-glucose 1-phosphate site.

This sequence belongs to the bacterial/plant glucose-1-phosphate adenylyltransferase family. Homotetramer.

The enzyme catalyses alpha-D-glucose 1-phosphate + ATP + H(+) = ADP-alpha-D-glucose + diphosphate. It participates in glycan biosynthesis; glycogen biosynthesis. In terms of biological role, involved in the biosynthesis of ADP-glucose, a building block required for the elongation reactions to produce glycogen. Catalyzes the reaction between ATP and alpha-D-glucose 1-phosphate (G1P) to produce pyrophosphate and ADP-Glc. The protein is Glucose-1-phosphate adenylyltransferase 2 of Vibrio vulnificus (strain YJ016).